A 531-amino-acid polypeptide reads, in one-letter code: Lysine--tRNA ligase, mitochondrial (531 aa).

The transit peptide at 1–18 directs the protein to the mitochondrion; that stretch reads MISRGLLSKGILSIIKRK.

The protein belongs to the class-II aminoacyl-tRNA synthetase family.

The protein localises to the mitochondrion. The enzyme catalyses tRNA(Lys) + L-lysine + ATP = L-lysyl-tRNA(Lys) + AMP + diphosphate. In Schizosaccharomyces pombe (strain 972 / ATCC 24843) (Fission yeast), this protein is Lysine--tRNA ligase, mitochondrial (msk1).